A 259-amino-acid polypeptide reads, in one-letter code: Gene 2 protein (259 aa).

Composition is skewed to basic and acidic residues over residues 1–12 (MPPTELEKKRGE) and 21–36 (QKQH…AKRK). Residues 1–36 (MPPTELEKKRGEYNQIAIDAQKQHAPTDEKREAKRK) form a disordered region.

This is Gene 2 protein (2) from Mycobacterium (Mycobacteriophage L5).